The following is a 130-amino-acid chain: Protein ApaG (130 aa).

Residues Ser3–Arg127 form the ApaG domain.

The protein is Protein ApaG of Methylocella silvestris (strain DSM 15510 / CIP 108128 / LMG 27833 / NCIMB 13906 / BL2).